The sequence spans 308 residues: PHO85 cyclin-2 (308 aa).

In terms of domain architecture, Cyclin N-terminal spans E18 to T146. The disordered stretch occupies residues S248 to K270. The span at D255–R264 shows a compositional bias: basic and acidic residues.

It belongs to the cyclin family. PCL1,2 subfamily. As to quaternary structure, forms a cyclin-CDK complex with PHO85. Interacts with RVS167.

It is found in the cytoplasm. Its subcellular location is the nucleus. In terms of biological role, G1/S-specific cyclin partner of the cyclin-dependent kinase (CDK) PHO85. Essential for the control of the cell cycle at the G1/S (start) transition. Together with cyclin PCL1, positively controls degradation of sphingoid long chain base kinase LCB4. The PCL2-PHO85 cyclin-CDK holoenzyme phosphorylates LCB4, which is required for its ubiquitination and degradation. PCL2-PHO85 also phosphorylates RVS167, linking cyclin-CDK activity with organization of the actin cytoskeleton. This chain is PHO85 cyclin-2 (PCL2), found in Saccharomyces cerevisiae (strain ATCC 204508 / S288c) (Baker's yeast).